The primary structure comprises 44 residues: Protein PsbN (44 aa).

Residues Phe7–Gly29 traverse the membrane as a helical segment.

The protein belongs to the PsbN family.

It is found in the plastid. The protein resides in the chloroplast thylakoid membrane. Its function is as follows. May play a role in photosystem I and II biogenesis. In Pleurastrum terricola (Filamentous green alga), this protein is Protein PsbN.